The sequence spans 615 residues: uncharacterized protein (615 aa).

This sequence belongs to the mycobacterial PPE family.

This is an uncharacterized protein from Mycobacterium tuberculosis (strain CDC 1551 / Oshkosh).